We begin with the raw amino-acid sequence, 195 residues long: MAKHKRKGLEGTGKESKRQKITPAEETPRTSEAGPDKETASTLVQEASPELSPEERRVLERKLKKERKKEEKKRLREAGIAATQTAKVQTLPAKPSAATLALEYLQGWAQKQESWRFQKTRQTWLLLHMYDEDKVPDEHFPTLLDYLEGLRGSARELTVRKAEALMQKLDEAEPEDSGGSPGKVQRLRQVLQLLS.

Residues 1–78 form a disordered region; the sequence is MAKHKRKGLE…KEEKKRLREA (78 aa). Composition is skewed to basic and acidic residues over residues 8–18 and 26–39; these read GLEGTGKESKR and ETPR…DKET. Residues serine 41, serine 48, and serine 52 each carry the phosphoserine modification. Basic and acidic residues predominate over residues 53-77; the sequence is PEERRVLERKLKKERKKEEKKRLRE. Residue serine 96 is modified to Phosphoserine.

In terms of tissue distribution, secreted via exosomes, secreted from the instestine, secretion is induced by feeding and cholesterol absorption. Expressed in enterocytes.

It is found in the secreted. Hormone secreted from the intestine in response to cholesterol, where it acts to inhibit cholesterol synthesis in the liver and VLDL secretion,leading to a reduction in circulating cholesterol levels. Acts through binding to its receptor, GPR146. The sequence is that of Cholesin (Chlsn) from Mus musculus (Mouse).